A 777-amino-acid polypeptide reads, in one-letter code: Mediator of RNA polymerase II transcription subunit 15 (777 aa).

Disordered stretches follow at residues 120 to 139 (MNLPGQPQPGASGMAPHGIT) and 418 to 520 (SIPV…EEQQ). Residues 420–434 (PVMSSPSPVQQVQTP) show a composition bias toward low complexity. Residues 435 to 448 (QPMPPPPQPSPQPS) are compositionally biased toward pro residues. Residues 449-471 (QPMSQPNSNVSSGPAPSPSSFMP) show a composition bias toward low complexity. The segment covering 500–519 (TPGNPNSVMSPASNNQSEEQ) has biased composition (polar residues).

It belongs to the Mediator complex subunit 15 family. As to quaternary structure, component of the Mediator complex. Interacts with srebf1 and srebf2. Interacts with smad2, smad3 and smad4.

It localises to the cytoplasm. It is found in the nucleus. In terms of biological role, component of the Mediator complex, a coactivator involved in the regulated transcription of nearly all RNA polymerase II-dependent genes. Mediator functions as a bridge to convey information from gene-specific regulatory proteins to the basal RNA polymerase II transcription machinery. Mediator is recruited to promoters by direct interactions with regulatory proteins and serves as a scaffold for the assembly of a functional preinitiation complex with RNA polymerase II and the general transcription factors. Required for cholesterol-dependent gene regulation. Positively regulates the Nodal signaling pathway. This is Mediator of RNA polymerase II transcription subunit 15 (med15) from Xenopus laevis (African clawed frog).